The following is a 361-amino-acid chain: Septin-2 (361 aa).

Residue Y17 is modified to Phosphotyrosine. Residues 34 to 306 (KGFEFTLMVV…ENFRSERLKR (273 aa)) enclose the Septin-type G domain. Residues 44–51 (GESGLGKS) are G1 motif. Residues 44–52 (GESGLGKST), T78, G104, and 183–186 (KADT) each bind GTP. The tract at residues 101–104 (DTPG) is G3 motif. Positions 182–185 (AKAD) are G4 motif. K190 is subject to N6-acetyllysine. The residue at position 211 (Y211) is a Phosphotyrosine. A Phosphoserine modification is found at S218. 3 residues coordinate GTP: G241, R256, and Y258. An important for dimerization region spans residues 260–270 (WGVVEVENPEH).

Belongs to the TRAFAC class TrmE-Era-EngA-EngB-Septin-like GTPase superfamily. Septin GTPase family. In terms of assembly, septins polymerize into heterooligomeric protein complexes that form filaments, and associate with cellular membranes, actin filaments and microtubules. GTPase activity is required for filament formation. Septin filaments are assembled from asymmetrical heterotrimers, composed of SEPTIN2, SEPTIN6 and SEPTIN7 that associate head-to-head to form a hexameric unit. Interaction between SEPTIN2 and SEPTIN7 seems indirect. Also interacts with SEPTIN9 and SEPTIN5. Interaction with SEPTIN4 not detected. Component of a septin core octameric complex consisting of SEPTIN12, SEPTIN7, SEPTIN6 and SEPTIN2 or SEPTIN4 in the order 12-7-6-2-2-6-7-12 or 12-7-6-4-4-6-7-12 and located in the sperm annulus. Interacts with MAP4. Interacts with DZIP1L. In terms of tissue distribution, widely expressed.

The protein localises to the cytoplasm. Its subcellular location is the cytoskeleton. The protein resides in the spindle. It localises to the chromosome. It is found in the centromere. The protein localises to the kinetochore. Its subcellular location is the cleavage furrow. The protein resides in the midbody. It localises to the cell cortex. It is found in the cell projection. The protein localises to the cilium membrane. Its subcellular location is the cilium. The protein resides in the flagellum. Functionally, filament-forming cytoskeletal GTPase. Forms a filamentous structure with SEPTIN12, SEPTIN6, SEPTIN2 and probably SEPTIN4 at the sperm annulus which is required for the structural integrity and motility of the sperm tail during postmeiotic differentiation. Required for normal organization of the actin cytoskeleton. Plays a role in the biogenesis of polarized columnar-shaped epithelium by maintaining polyglutamylated microtubules, thus facilitating efficient vesicle transport, and by impeding MAP4 binding to tubulin. Required for the progression through mitosis. Forms a scaffold at the midplane of the mitotic splindle required to maintain CENPE localization at kinetochores and consequently chromosome congression. During anaphase, may be required for chromosome segregation and spindle elongation. Plays a role in ciliogenesis and collective cell movements. In cilia, required for the integrity of the diffusion barrier at the base of the primary cilium that prevents diffusion of transmembrane proteins between the cilia and plasma membranes: probably acts by regulating the assembly of the tectonic-like complex (also named B9 complex) by localizing TMEM231 protein. The polypeptide is Septin-2 (Mus musculus (Mouse)).